Reading from the N-terminus, the 477-residue chain is Argininosuccinate lyase (477 aa).

The segment covering Met-1–Gly-18 has biased composition (polar residues). The segment at Met-1–Gly-21 is disordered.

It belongs to the lyase 1 family. Argininosuccinate lyase subfamily.

It localises to the cytoplasm. It carries out the reaction 2-(N(omega)-L-arginino)succinate = fumarate + L-arginine. Its pathway is amino-acid biosynthesis; L-arginine biosynthesis; L-arginine from L-ornithine and carbamoyl phosphate: step 3/3. This is Argininosuccinate lyase from Acinetobacter baylyi (strain ATCC 33305 / BD413 / ADP1).